A 77-amino-acid polypeptide reads, in one-letter code: Large ribosomal subunit protein bL28 (77 aa).

The tract at residues 1-25 (MARVCQVTGKAPMSGNNVSHANNKT) is disordered.

Belongs to the bacterial ribosomal protein bL28 family.

The polypeptide is Large ribosomal subunit protein bL28 (Paraburkholderia phymatum (strain DSM 17167 / CIP 108236 / LMG 21445 / STM815) (Burkholderia phymatum)).